The chain runs to 475 residues: Sulfate adenylyltransferase subunit 1 (475 aa).

The tr-type G domain maps to 25-239 (KSLLRFLTCG…EVLETVEIQR (215 aa)). The interval 34 to 41 (GSVDDGKS) is G1. GTP is bound at residue 34–41 (GSVDDGKS). Residues 92–96 (GITID) are G2. Positions 113-116 (DTPG) are G3. GTP-binding positions include 113-117 (DTPGH) and 168-171 (NKMD). The G4 stretch occupies residues 168-171 (NKMD). The G5 stretch occupies residues 206–208 (SAL).

This sequence belongs to the TRAFAC class translation factor GTPase superfamily. Classic translation factor GTPase family. CysN/NodQ subfamily. Heterodimer composed of CysD, the smaller subunit, and CysN.

It carries out the reaction sulfate + ATP + H(+) = adenosine 5'-phosphosulfate + diphosphate. Its pathway is sulfur metabolism; hydrogen sulfide biosynthesis; sulfite from sulfate: step 1/3. In terms of biological role, with CysD forms the ATP sulfurylase (ATPS) that catalyzes the adenylation of sulfate producing adenosine 5'-phosphosulfate (APS) and diphosphate, the first enzymatic step in sulfur assimilation pathway. APS synthesis involves the formation of a high-energy phosphoric-sulfuric acid anhydride bond driven by GTP hydrolysis by CysN coupled to ATP hydrolysis by CysD. This Escherichia coli (strain 55989 / EAEC) protein is Sulfate adenylyltransferase subunit 1.